Reading from the N-terminus, the 272-residue chain is uncharacterized protein (272 aa).

The next 2 membrane-spanning stretches (helical) occupy residues 9-29 (GGDI…ASEH) and 252-272 (SHIS…ISFI).

Its subcellular location is the membrane. This is an uncharacterized protein from Caenorhabditis elegans.